The sequence spans 426 residues: Cell cycle checkpoint control protein RAD9B (426 aa).

A Phosphoserine modification is found at serine 359.

This sequence belongs to the rad9 family. In terms of assembly, interacts with HUS1, HUS1B, RAD1, RAD9A and RAD17. In terms of tissue distribution, expressed in testis and skeletal muscle.

This is Cell cycle checkpoint control protein RAD9B (RAD9B) from Homo sapiens (Human).